Consider the following 253-residue polypeptide: MAHCKTEQDDWLLAHLKYLLFIFNFFFWVGGAAVMAVGIWTLVEKSVYLSILASSTFAASAYVLIFVGGLVMTTGFLGFGAIIREQKSCLSTYFCLLLAIFLVELVAGVLAHVYYQRLSDELKRHLHSTLTEHYGQPGAAEITASVDRLQQDFKCCGSNSSADWQHSVYILSQEAIGRQVPDSCCKTVVARCGQRAHPSNIYKVEGGCMAKLEQFLADHLLLMGAVGIGVACLQICGMVLTCCLHRRLQQHFY.

4 helical membrane-spanning segments follow: residues 19-39 (LLFI…AVGI), 63-83 (VLIF…GAII), 93-113 (YFCL…LAHV), and 220-240 (LLLM…GMVL).

It belongs to the tetraspanin (TM4SF) family.

It is found in the membrane. This is Tetraspanin-11 (Tspan11) from Rattus norvegicus (Rat).